Consider the following 90-residue polypeptide: Probable Fe(2+)-trafficking protein (90 aa).

The protein belongs to the Fe(2+)-trafficking protein family.

Its function is as follows. Could be a mediator in iron transactions between iron acquisition and iron-requiring processes, such as synthesis and/or repair of Fe-S clusters in biosynthetic enzymes. This is Probable Fe(2+)-trafficking protein from Pseudomonas aeruginosa (strain UCBPP-PA14).